The primary structure comprises 188 residues: U1 small nuclear ribonucleoprotein C-2 (188 aa).

The Matrin-type zinc finger occupies 4–36 (YYCDYCDVFLVSESPSVRKAHNSGRNHLTNVRD). Residues 57–188 (FETGGGNSTS…MNPDRARQLG (132 aa)) form a disordered region. The segment covering 72-82 (GNPPGSQPGPP) has biased composition (pro residues). Positions 109-124 (AMLALMNGQNGMSSPG) are enriched in low complexity. The span at 125–141 (SGPPPMRFAGPPIPNNM) shows a compositional bias: pro residues.

Belongs to the U1 small nuclear ribonucleoprotein C family. As to quaternary structure, U1 snRNP is composed of the 7 core Sm proteins B/B', D1, D2, D3, E, F and G that assemble in a heptameric protein ring on the Sm site of the small nuclear RNA to form the core snRNP, and at least 3 U1 snRNP-specific proteins U1-70K, U1-A and U1-C. U1-C interacts with U1 snRNA and the 5' splice-site region of the pre-mRNA.

It is found in the nucleus. Functionally, component of the spliceosomal U1 snRNP, which is essential for recognition of the pre-mRNA 5' splice-site and the subsequent assembly of the spliceosome. U1-C is directly involved in initial 5' splice-site recognition for both constitutive and regulated alternative splicing. The interaction with the 5' splice-site seems to precede base-pairing between the pre-mRNA and the U1 snRNA. Stimulates commitment or early (E) complex formation by stabilizing the base pairing of the 5' end of the U1 snRNA and the 5' splice-site region. The polypeptide is U1 small nuclear ribonucleoprotein C-2 (Puccinia graminis f. sp. tritici (strain CRL 75-36-700-3 / race SCCL) (Black stem rust fungus)).